Here is a 126-residue protein sequence, read N- to C-terminus: Histone H2B type 1-K (126 aa).

The segment covering 1-12 (MPEPAKSAPAPK) has biased composition (low complexity). Positions 1–36 (MPEPAKSAPAPKKGSKKAVTKAQKKDGKKRKRSRKE) are disordered. Pro-2 is modified (N-acetylproline). Residue Glu-3 is modified to ADP-ribosyl glutamic acid. Lys-6 carries the post-translational modification N6-(2-hydroxyisobutyryl)lysine; alternate. At Lys-6 the chain carries N6-(beta-hydroxybutyryl)lysine; alternate. Lys-6 carries the N6-acetyllysine; alternate modification. Position 6 is an N6-butyryllysine; alternate (Lys-6). Lys-6 is subject to N6-crotonyllysine; alternate. An N6-lactoyllysine; alternate modification is found at Lys-6. Residue Lys-6 forms a Glycyl lysine isopeptide (Lys-Gly) (interchain with G-Cter in SUMO2); alternate linkage. Ser-7 is modified (ADP-ribosylserine). Lys-12 is subject to N6-(beta-hydroxybutyryl)lysine; alternate. Residues Lys-12 and Lys-13 each carry the N6-acetyllysine; alternate modification. N6-crotonyllysine; alternate occurs at positions 12 and 13. Lys-12 carries the post-translational modification N6-lactoyllysine; alternate. Position 13 is an N6-(2-hydroxyisobutyryl)lysine; alternate (Lys-13). Ser-15 is modified (phosphoserine; by STK4/MST1). N6-acetyllysine; alternate occurs at positions 16, 17, 21, and 24. Lys-16, Lys-17, Lys-21, and Lys-24 each carry N6-crotonyllysine; alternate. An N6-lactoyllysine; alternate mark is found at Lys-16, Lys-17, Lys-21, and Lys-24. N6-(beta-hydroxybutyryl)lysine; alternate is present on residues Lys-17 and Lys-21. Lys-17 is modified (N6-glutaryllysine; alternate). An N6-(2-hydroxyisobutyryl)lysine; alternate mark is found at Lys-21 and Lys-24. Lys-21 carries the N6-butyryllysine; alternate modification. Lys-21 is covalently cross-linked (Glycyl lysine isopeptide (Lys-Gly) (interchain with G-Cter in SUMO2); alternate). Lys-25 is subject to N6-(2-hydroxyisobutyryl)lysine. Position 35 is an N6-(2-hydroxyisobutyryl)lysine; alternate (Lys-35). At Lys-35 the chain carries N6-(beta-hydroxybutyryl)lysine; alternate. Lys-35 carries the post-translational modification N6-crotonyllysine; alternate. N6-glutaryllysine; alternate is present on Lys-35. Lys-35 bears the N6-succinyllysine; alternate mark. Lys-35 is covalently cross-linked (Glycyl lysine isopeptide (Lys-Gly) (interchain with G-Cter in ubiquitin); alternate). Glu-36 carries the polyADP-ribosyl glutamic acid modification. Ser-37 bears the Phosphoserine; by AMPK mark. Lys-44, Lys-47, and Lys-58 each carry N6-(2-hydroxyisobutyryl)lysine; alternate. At Lys-44 the chain carries N6-lactoyllysine; alternate. An N6-glutaryllysine; alternate mark is found at Lys-44 and Lys-47. Lys-47 carries the post-translational modification N6-methyllysine; alternate. N6,N6-dimethyllysine; alternate is present on Lys-58. At Arg-80 the chain carries Dimethylated arginine. Position 86 is an N6-(2-hydroxyisobutyryl)lysine; alternate (Lys-86). N6-(beta-hydroxybutyryl)lysine; alternate is present on Lys-86. An N6-acetyllysine; alternate modification is found at Lys-86. An N6-lactoyllysine; alternate modification is found at Lys-86. Residue Lys-86 is modified to N6,N6,N6-trimethyllysine; alternate. Residues Arg-87 and Arg-93 each carry the omega-N-methylarginine modification. The residue at position 109 (Lys-109) is an N6-(2-hydroxyisobutyryl)lysine; alternate. At Lys-109 the chain carries N6-lactoyllysine; alternate. Lys-109 is modified (N6-glutaryllysine; alternate). Lys-109 carries the post-translational modification N6-methyllysine; alternate. Ser-113 carries O-linked (GlcNAc) serine glycosylation. Thr-116 is modified (phosphothreonine). N6-(2-hydroxyisobutyryl)lysine; alternate occurs at positions 117 and 121. 2 positions are modified to N6-(beta-hydroxybutyryl)lysine; alternate: Lys-117 and Lys-121. Residues Lys-117 and Lys-121 each carry the N6-lactoyllysine; alternate modification. An N6-glutaryllysine; alternate mark is found at Lys-117 and Lys-121. An N6-succinyllysine; alternate mark is found at Lys-117 and Lys-121. An N6-malonyllysine; alternate modification is found at Lys-117. Position 117 is an N6-methylated lysine; alternate (Lys-117). A Glycyl lysine isopeptide (Lys-Gly) (interchain with G-Cter in ubiquitin); alternate cross-link involves residue Lys-121.

The protein belongs to the histone H2B family. As to quaternary structure, the nucleosome is a histone octamer containing two molecules each of H2A, H2B, H3 and H4 assembled in one H3-H4 heterotetramer and two H2A-H2B heterodimers. The octamer wraps approximately 147 bp of DNA. Monoubiquitination at Lys-35 (H2BK34Ub) by the MSL1/MSL2 dimer is required for histone H3 'Lys-4' (H3K4me) and 'Lys-79' (H3K79me) methylation and transcription activation at specific gene loci, such as HOXA9 and MEIS1 loci. Similarly, monoubiquitination at Lys-121 (H2BK120Ub) by the RNF20/40 complex gives a specific tag for epigenetic transcriptional activation and is also prerequisite for histone H3 'Lys-4' and 'Lys-79' methylation. It also functions cooperatively with the FACT dimer to stimulate elongation by RNA polymerase II. H2BK120Ub also acts as a regulator of mRNA splicing: deubiquitination by USP49 is required for efficient cotranscriptional splicing of a large set of exons. In terms of processing, phosphorylation at Ser-37 (H2BS36ph) by AMPK in response to stress promotes transcription. Phosphorylated on Ser-15 (H2BS14ph) by STK4/MST1 during apoptosis; which facilitates apoptotic chromatin condensation. Also phosphorylated on Ser-15 in response to DNA double strand breaks (DSBs), and in correlation with somatic hypermutation and immunoglobulin class-switch recombination. Post-translationally, glcNAcylation at Ser-113 promotes monoubiquitination of Lys-121. It fluctuates in response to extracellular glucose, and associates with transcribed genes. ADP-ribosylated by PARP1 or PARP2 on Ser-7 (H2BS6ADPr) in response to DNA damage. H2BS6ADPr promotes recruitment of CHD1L. Mono-ADP-ribosylated on Glu-3 (H2BE2ADPr) by PARP3 in response to single-strand breaks. Poly ADP-ribosylation on Glu-36 (H2BE35ADPr) by PARP1 regulates adipogenesis: it inhibits phosphorylation at Ser-37 (H2BS36ph), thereby blocking expression of pro-adipogenetic genes. In terms of processing, crotonylation (Kcr) is specifically present in male germ cells and marks testis-specific genes in post-meiotic cells, including X-linked genes that escape sex chromosome inactivation in haploid cells. Crotonylation marks active promoters and enhancers and confers resistance to transcriptional repressors. It is also associated with post-meiotically activated genes on autosomes. Post-translationally, lactylated in macrophages by EP300/P300 by using lactoyl-CoA directly derived from endogenous or exogenous lactate, leading to stimulates gene transcription.

The protein localises to the nucleus. The protein resides in the chromosome. In terms of biological role, core component of nucleosome. Nucleosomes wrap and compact DNA into chromatin, limiting DNA accessibility to the cellular machineries which require DNA as a template. Histones thereby play a central role in transcription regulation, DNA repair, DNA replication and chromosomal stability. DNA accessibility is regulated via a complex set of post-translational modifications of histones, also called histone code, and nucleosome remodeling. Functionally, has broad antibacterial activity. May contribute to the formation of the functional antimicrobial barrier of the colonic epithelium, and to the bactericidal activity of amniotic fluid. The polypeptide is Histone H2B type 1-K (Homo sapiens (Human)).